Consider the following 200-residue polypeptide: MIKLIVGLGNPGAEYAATRHNAGFWLVDQLARMGHVTLRNETRFHGYAARATLWSHEVWLLQPQTFMNRSGLATVALARFYKILPDEILVVHDELDLLPGAVKLKLGGGSGGHNGLKDIAAHLTTQQFWRLRVGIGHPRNLLPPGTAPSGQHDVANFVLKAPRREEQELIDRAIDRSLDALPDLVAGNAERAMMRLHTTG.

Tyr-15 lines the tRNA pocket. The Proton acceptor role is filled by His-20. Residues Phe-66, Asn-68, and Asn-114 each coordinate tRNA.

It belongs to the PTH family. As to quaternary structure, monomer.

The protein resides in the cytoplasm. It catalyses the reaction an N-acyl-L-alpha-aminoacyl-tRNA + H2O = an N-acyl-L-amino acid + a tRNA + H(+). Hydrolyzes ribosome-free peptidyl-tRNAs (with 1 or more amino acids incorporated), which drop off the ribosome during protein synthesis, or as a result of ribosome stalling. Functionally, catalyzes the release of premature peptidyl moieties from peptidyl-tRNA molecules trapped in stalled 50S ribosomal subunits, and thus maintains levels of free tRNAs and 50S ribosomes. This Ralstonia nicotianae (strain ATCC BAA-1114 / GMI1000) (Ralstonia solanacearum) protein is Peptidyl-tRNA hydrolase.